The chain runs to 369 residues: Putative 2-aminoethylphosphonate import ATP-binding protein PhnT (369 aa).

The ABC transporter domain maps to 19–250 (IVLDSLRVAY…PPNRFAAEFL (232 aa)). An ATP-binding site is contributed by 51–58 (GPSGSGKT).

Belongs to the ABC transporter superfamily. 2-aminoethylphosphonate importer (TC 3.A.1.11.5) family.

Its subcellular location is the cell inner membrane. Functionally, probably part of the PhnSTUV complex (TC 3.A.1.11.5) involved in 2-aminoethylphosphonate import. Probably responsible for energy coupling to the transport system. The sequence is that of Putative 2-aminoethylphosphonate import ATP-binding protein PhnT (phnT) from Salmonella paratyphi A (strain ATCC 9150 / SARB42).